A 152-amino-acid polypeptide reads, in one-letter code: Bacchus (152 aa).

Basic and acidic residues predominate over residues 29-41 (DLKAKAAAEDKAA). The segment at 29–152 (DLKAKAAAED…DDGSGSDDQA (124 aa)) is disordered. Residues 42–51 (AADAAGDAAD) are compositionally biased toward low complexity. Basic and acidic residues predominate over residues 72–89 (ESVKGTKRPAEAKSAESK). Positions 99 to 152 (GDSDEEEALEEIIEGDSEIESDEYDIPYDGEEDDIECDDDDDDNDDGSGSDDQA) are enriched in acidic residues.

As to expression, expressed in the brain.

Its subcellular location is the nucleus. Its function is as follows. Negatively regulates tyramine beta-hydroxylase tbh and thus the conversion of tyramine (TA) to octopamine (OA). In tyrosine decarboxylase 2 (Tdc2) neurons, acts in an amine-mediated signaling pathway to negatively regulate acute ethanol sensitivity probably via tbh-mediated depletion of TA. This Drosophila melanogaster (Fruit fly) protein is Bacchus.